A 437-amino-acid polypeptide reads, in one-letter code: GTPase Der (437 aa).

2 consecutive EngA-type G domains span residues 3-167 (ALVA…PAEN) and 177-353 (PRIA…AHRS). Residues 9–16 (GRPNVGKS), 56–60 (DTGGW), 119–122 (NKVD), 183–190 (GRPNAGKS), 230–234 (DTAGI), and 295–298 (NKWD) each bind GTP. The KH-like domain maps to 354-437 (TRIPTHKLNE…TPINIFIREK (84 aa)).

It belongs to the TRAFAC class TrmE-Era-EngA-EngB-Septin-like GTPase superfamily. EngA (Der) GTPase family. In terms of assembly, associates with the 50S ribosomal subunit.

GTPase that plays an essential role in the late steps of ribosome biogenesis. The protein is GTPase Der of Porphyromonas gingivalis (strain ATCC BAA-308 / W83).